A 119-amino-acid chain; its full sequence is MIRGIGVDVVDVARFARSAERTPGLVPRLFAPAERSLPARSLAARFAAKEALIKALGGPGGISWQDMEVVRDEHGDPSFRVAGVVAQVAAARGVTRIHLSMSHDAGLATAFVVTEGDAP.

Asp8 and Glu50 together coordinate Mg(2+).

This sequence belongs to the P-Pant transferase superfamily. AcpS family. The cofactor is Mg(2+).

It is found in the cytoplasm. It carries out the reaction apo-[ACP] + CoA = holo-[ACP] + adenosine 3',5'-bisphosphate + H(+). In terms of biological role, transfers the 4'-phosphopantetheine moiety from coenzyme A to a Ser of acyl-carrier-protein. The protein is Holo-[acyl-carrier-protein] synthase of Clavibacter michiganensis subsp. michiganensis (strain NCPPB 382).